The primary structure comprises 606 residues: V-type proton ATPase catalytic subunit A (606 aa).

239 to 246 (GAFGCGKT) serves as a coordination point for ATP.

This sequence belongs to the ATPase alpha/beta chains family. As to quaternary structure, V-ATPase is a heteromultimeric enzyme made up of two complexes: the ATP-hydrolytic V1 complex and the proton translocation V0 complex. The V1 complex consists of three catalytic AB heterodimers that form a heterohexamer, three peripheral stalks each consisting of EG heterodimers, one central rotor including subunits D and F, and the regulatory subunits C and H. The proton translocation complex V0 consists of the proton transport subunit a, a ring of proteolipid subunits c9c'', rotary subunit d, subunits e and f, and the accessory subunits vah-19/Ac45 and vah-20/PRR.

It catalyses the reaction ATP + H2O + 4 H(+)(in) = ADP + phosphate + 5 H(+)(out). Its function is as follows. Catalytic subunit of the V1 complex of vacuolar(H+)-ATPase (V-ATPase), a multisubunit enzyme composed of a peripheral complex (V1) that hydrolyzes ATP and a membrane integral complex (V0) that translocates protons. V-ATPase is responsible for acidifying and maintaining the pH of intracellular compartments and in some cell types, is targeted to the plasma membrane, where it is responsible for acidifying the extracellular environment. Required along with other vacuolar ATPase components for the removal of protein aggregates which form in immature oocytes in the distal gonad. This removal occurs as the oocytes mature and move to the proximal gonad, is triggered by the introduction of sperm through mating and occurs before fertilization. The introduction of sperm triggers V-ATPase accumulation in proximal oocytes and induces lysosomal acidification which leads to engulfing of protein aggregates by lysosomes and subsequent clearance of the aggregates. Lysosomal acidification also leads to changes in mitochondrial morphology and function. Mitochondria in distal immature oocytes are fragmented, produce high levels of reactive oxygen species (ROS) and have high membrane potential, indicative of metabolic inactivity. In contrast, mitochondria in proximal mature oocytes are tubular with lower ROS levels and membrane potential, indicative of an active metabolic state required for aggregate mobilization before clearance. Involved in receptor-mediated endocytosis. The sequence is that of V-type proton ATPase catalytic subunit A from Caenorhabditis briggsae.